The sequence spans 648 residues: Transcription initiation factor TFIID subunit 5 (648 aa).

Positions 1–13 (MDSENSSSHSISS) are enriched in low complexity. Positions 1–21 (MDSENSSSHSISSPQMFQNTH) are disordered. Positions 35-67 (MNNESLQMIIGYLRRNGLTETEELLTREAGPVL) constitute a LisH domain. 6 WD repeats span residues 317-358 (NAPI…KKLR), 392-431 (GHGGPVFSVNFSPDRRLLISSAGDRTVRLWSMETQRNAVI), 433-472 (RTPAVVWQAQFCSRGYYFATASADKTAAMWSTDRMHPLRI), 475-514 (DPYGDVGCIDYHPNCNYIAGGSDDRYVRVWDVCSGTRVRI), 517-556 (GHKASIIAVKFSPCGRYIVSLDAIGNLMIWDLAYQRLVAA), and 560-599 (EQAGTKGSITFSRDGGVFAVSHGNSSIQLYSLDTLIGTVL).

The protein belongs to the WD repeat TAF5 family. In terms of assembly, component of the TFIID basal transcription factor complex, composed of TATA-box-binding protein tbp-1, and a number of TBP-associated factors (TAFs).

The protein localises to the nucleus. Functionally, the TFIID basal transcription factor complex plays a major role in the initiation of RNA polymerase II (Pol II)-dependent transcription. TFIID recognizes and binds promoters via its subunit tbp-1, a TATA-box-binding protein, and promotes assembly of the pre-initiation complex (PIC). The TFIID complex consists of tbp-1 and TBP-associated factors (TAFs), including taf-5. Essential for early embryonic development, but not required for transcription of some genes; probably acts via activating transcription initiation by RNA Pol II, as part of the TFIID complex. This chain is Transcription initiation factor TFIID subunit 5, found in Caenorhabditis elegans.